The chain runs to 480 residues: Probable GH family 25 lysozyme 3 (480 aa).

The first 20 residues, 1 to 20 (MNKLILSILSVLLIVSIASA), serve as a signal peptide directing secretion. Residues 21–231 (GNGIDISSGT…STTSSSATSS (211 aa)) enclose the Ch-type lysozyme domain. Catalysis depends on residues Asp-25, Asp-114, and Glu-116. Low complexity predominate over residues 219–472 (SGSSTTSSSA…SSGSGNYTSG (254 aa)). The interval 219–480 (SGSSTTSSSA…SGSGNGAFLF (262 aa)) is disordered. N-linked (GlcNAc...) asparagine glycosylation is found at Asn-423, Asn-428, Asn-437, Asn-446, and Asn-468.

This sequence belongs to the glycosyl hydrolase 25 family.

Its subcellular location is the secreted. It carries out the reaction Hydrolysis of (1-&gt;4)-beta-linkages between N-acetylmuramic acid and N-acetyl-D-glucosamine residues in a peptidoglycan and between N-acetyl-D-glucosamine residues in chitodextrins.. This Dictyostelium discoideum (Social amoeba) protein is Probable GH family 25 lysozyme 3.